Here is a 614-residue protein sequence, read N- to C-terminus: Zinc metalloproteinase dpy-31 (614 aa).

An N-terminal signal peptide occupies residues 1 to 24; that stretch reads MSLLRCTTLLLVVVAIALPPCILG. The propeptide occupies 25 to 150; the sequence is YSLHDGSRLD…KTGQRRVKRK (126 aa). Positions 150-349 constitute a Peptidase M12A domain; it reads KFIGSDLRRW…IRLMNKIYCS (200 aa). Residue asparagine 190 is glycosylated (N-linked (GlcNAc...) asparagine). Cystine bridges form between cysteine 193-cysteine 348, cysteine 216-cysteine 237, cysteine 352-cysteine 372, cysteine 374-cysteine 383, and cysteine 394-cysteine 422. Histidine 245 is a Zn(2+) binding site. Glutamate 246 is a catalytic residue. The Zn(2+) site is built by histidine 249 and histidine 255. In terms of domain architecture, EGF-like spans 344–384; it reads NKIYCSNVCSRKLPCQRGGYTDPRRCDRCRCPDGFTGQFCE. Positions 394–510 constitute a CUB domain; the sequence is CGGRIQVNGG…RGFEARARAL (117 aa). An N-linked (GlcNAc...) asparagine glycan is attached at asparagine 461. A TSP type-1 domain is found at 513–562; it reads NGQWASWSPWTPCTASCGACGSRMRTRVCSHGACAGEPVENQVCNTHPCN. 3 disulfides stabilise this stretch: cysteine 525-cysteine 556, cysteine 529-cysteine 561, and cysteine 541-cysteine 546.

Zn(2+) is required as a cofactor.

The protein resides in the secreted. Inhibited by marimastat and tripeptide hydroxamic acids. Inhibited by 1,10-phenanthroline. Metalloprotease which cleaves the carboxyl terminus of procollagens to mature collagens. Probably involved in cuticular collagen maturation. The chain is Zinc metalloproteinase dpy-31 from Teladorsagia circumcincta (Brown stomach worm).